The sequence spans 355 residues: Putative L-lysine 2,3-aminomutase (355 aa).

In terms of domain architecture, Radical SAM core spans 93-308 (VHQYANRVLM…KERLSGLSLP (216 aa)). Cys-108, Cys-112, and Cys-115 together coordinate [4Fe-4S] cluster. Lys-320 is subject to N6-(pyridoxal phosphate)lysine.

Belongs to the radical SAM superfamily. KamA family. The cofactor is [4Fe-4S] cluster. It depends on pyridoxal 5'-phosphate as a cofactor.

In Treponema pallidum (strain Nichols), this protein is Putative L-lysine 2,3-aminomutase.